Reading from the N-terminus, the 255-residue chain is F-box only protein 44 (255 aa).

Positions 3–50 (VGNINELPENILLELFIHIPARQLLLRCRPVCSLWRDLIDLVTLWKRK) constitute an F-box domain. Residues 71–252 (FYFLRSLQRN…VTNSSITIGP (182 aa)) form the FBA domain.

Part of a SCF (SKP1-cullin-F-box) protein ligase complex. Interacts with SKP1 and CUL1. Expressed in brain, liver, pancreas and adipose tissue (at protein level). Widely expressed.

Its function is as follows. Substrate-recognition component of the SCF (SKP1-CUL1-F-box protein)-type E3 ubiquitin ligase complex. This is F-box only protein 44 (Fbxo44) from Mus musculus (Mouse).